Consider the following 503-residue polypeptide: Cytochrome P450 3A13 (503 aa).

Position 442 (cysteine 442) interacts with heme.

This sequence belongs to the cytochrome P450 family. The cofactor is heme.

The protein resides in the endoplasmic reticulum membrane. It localises to the microsome membrane. It catalyses the reaction an organic molecule + reduced [NADPH--hemoprotein reductase] + O2 = an alcohol + oxidized [NADPH--hemoprotein reductase] + H2O + H(+). Its function is as follows. Can activate aflatoxin B1 to a genotoxic product. The sequence is that of Cytochrome P450 3A13 (Cyp3a13) from Mus musculus (Mouse).